The sequence spans 1325 residues: Lysine-specific demethylase 3A (1325 aa).

Disordered regions lie at residues 249–284, 300–333, and 372–399; these read SKRIGGVKRKPSENSGSVDAKHTKSSPEVSQSQGHV, PANKDQRHQGLPLPANSPPNLGAETPQGTCRRSV, and QNGKYTSLISSRSSSLSDSTNGKETGLK. Positions 274 to 283 are enriched in polar residues; sequence SPEVSQSQGH. Residues 378–390 are compositionally biased toward low complexity; it reads SLISSRSSSLSDS. The segment at 669–694 adopts a C6-type zinc-finger fold; it reads CDVCDTTIFNLRWVCSKCGFGVCVDC. Disordered regions lie at residues 772-791 and 798-819; these read TLKEDSKQNLVPGERTSLQQ and PQLPTHEPPVKPAAGSKQTASV. An LXXLL motif motif is present at residues 888-892; the sequence is LRNLL. Positions 1062 to 1285 constitute a JmjC domain; it reads MPSRFDDLMK…HCFWLTQEFR (224 aa). Fe cation contacts are provided by histidine 1124, aspartate 1126, and histidine 1253.

It belongs to the JHDM2 histone demethylase family. Requires Fe(2+) as cofactor.

The protein resides in the cytoplasm. It is found in the nucleus. It carries out the reaction N(6),N(6)-dimethyl-L-lysyl(9)-[histone H3] + 2 2-oxoglutarate + 2 O2 = L-lysyl(9)-[histone H3] + 2 formaldehyde + 2 succinate + 2 CO2. Histone demethylase that specifically demethylates 'Lys-9' of histone H3, thereby playing a central role in histone code. Preferentially demethylates mono- and dimethylated H3 'Lys-9' residue, with a preference for dimethylated residue, while it has weak or no activity on trimethylated H3 'Lys-9'. Demethylation of Lys residue generates formaldehyde and succinate. This chain is Lysine-specific demethylase 3A (KDM3A), found in Gallus gallus (Chicken).